The sequence spans 356 residues: UDP-N-acetylglucosamine--N-acetylmuramyl-(pentapeptide) pyrophosphoryl-undecaprenol N-acetylglucosamine transferase (356 aa).

Residues 12 to 14 (TGG), N124, R163, S188, I242, and Q287 contribute to the UDP-N-acetyl-alpha-D-glucosamine site.

It belongs to the glycosyltransferase 28 family. MurG subfamily.

The protein resides in the cell inner membrane. The catalysed reaction is di-trans,octa-cis-undecaprenyl diphospho-N-acetyl-alpha-D-muramoyl-L-alanyl-D-glutamyl-meso-2,6-diaminopimeloyl-D-alanyl-D-alanine + UDP-N-acetyl-alpha-D-glucosamine = di-trans,octa-cis-undecaprenyl diphospho-[N-acetyl-alpha-D-glucosaminyl-(1-&gt;4)]-N-acetyl-alpha-D-muramoyl-L-alanyl-D-glutamyl-meso-2,6-diaminopimeloyl-D-alanyl-D-alanine + UDP + H(+). It functions in the pathway cell wall biogenesis; peptidoglycan biosynthesis. In terms of biological role, cell wall formation. Catalyzes the transfer of a GlcNAc subunit on undecaprenyl-pyrophosphoryl-MurNAc-pentapeptide (lipid intermediate I) to form undecaprenyl-pyrophosphoryl-MurNAc-(pentapeptide)GlcNAc (lipid intermediate II). This is UDP-N-acetylglucosamine--N-acetylmuramyl-(pentapeptide) pyrophosphoryl-undecaprenol N-acetylglucosamine transferase from Pseudomonas syringae pv. tomato (strain ATCC BAA-871 / DC3000).